A 494-amino-acid polypeptide reads, in one-letter code: Alpha-amylase-related protein (494 aa).

A signal peptide spans 1-20 (MFKFASAVILCVVAASSTLA). Gln21 carries the post-translational modification Pyrrolidone carboxylic acid. Cys48 and Cys104 are oxidised to a cystine. The Ca(2+) site is built by Asn118, Gln169, and Asp178. Cys157 and Cys171 form a disulfide bridge. Arg206 contributes to the chloride binding site. Asp208 serves as the catalytic Nucleophile. His212 provides a ligand contact to Ca(2+). Residue Glu245 is the Proton donor of the active site. Chloride contacts are provided by Asn308 and Arg343. Intrachain disulfides connect Cys376/Cys382, Cys418/Cys441, and Cys448/Cys460.

Belongs to the glycosyl hydrolase 13 family. As to quaternary structure, monomer. The cofactor is Ca(2+). Chloride serves as cofactor.

It localises to the secreted. It catalyses the reaction Endohydrolysis of (1-&gt;4)-alpha-D-glucosidic linkages in polysaccharides containing three or more (1-&gt;4)-alpha-linked D-glucose units.. The protein is Alpha-amylase-related protein (Amyrel) of Drosophila varians (Fruit fly).